A 529-amino-acid chain; its full sequence is Probable anion transporter 1, chloroplastic (529 aa).

A chloroplast-targeting transit peptide spans 1–55 (MLYLLPLSVSCRVPGSPPAPRSRRFLDPGGGRGVGDGLGGVRVFRRRALRGTDVR). 2 disordered regions span residues 13 to 39 (VPGS…DGLG) and 52 to 78 (TDVR…GGYG). The segment covering 28-39 (PGGGRGVGDGLG) has biased composition (gly residues). Basic and acidic residues predominate over residues 67–76 (RHDDARHDGG). 11 consecutive transmembrane segments (helical) span residues 120 to 140 (WAIV…RVNM), 158 to 178 (VGLI…AGGI), 187 to 207 (TVLG…PFAA), 209 to 229 (LGLP…GVAM), 251 to 271 (LVYS…PLLI), 274 to 294 (FGWP…FSTW), 340 to 360 (VWAL…LLTW), 378 to 398 (LFCV…GWIA), 418 to 438 (IGFL…SPAM), 469 to 489 (AGVL…FGTA), and 503 to 523 (VFKV…LFST).

The protein belongs to the major facilitator superfamily. Sodium/anion cotransporter (TC 2.A.1.14) family.

It is found in the plastid. It localises to the chloroplast membrane. Functionally, probable anion transporter. In Oryza sativa subsp. japonica (Rice), this protein is Probable anion transporter 1, chloroplastic (PHT4;1).